A 279-amino-acid polypeptide reads, in one-letter code: Zinc finger CCCH domain-containing protein 42 (279 aa).

The disordered stretch occupies residues 11–77; sequence SDHRSSSTPM…KAAVEPQEYP (67 aa). The segment covering 16 to 39 has biased composition (low complexity); sequence SSTPMATTTSSSASDPAAISPTPS. 3 C3H1-type zinc fingers span residues 79-107, 120-148, and 186-214; these read RPGV…HPAK, RPGE…HPPD, and RPGT…HPNS.

This chain is Zinc finger CCCH domain-containing protein 42, found in Oryza sativa subsp. japonica (Rice).